Here is a 55-residue protein sequence, read N- to C-terminus: AYFITDACISCGACESECPVSPISPGDSVYVIDADACIECGACANVCPVDAPQQK.

4Fe-4S ferredoxin-type domains are found at residues 2–27 and 28–55; these read YFIT…SPGD and SVYV…PQQK. [4Fe-4S] cluster is bound by residues cysteine 8, cysteine 11, cysteine 14, cysteine 18, cysteine 37, cysteine 40, cysteine 43, and cysteine 47.

Requires [4Fe-4S] cluster as cofactor.

Its function is as follows. Ferredoxins are iron-sulfur proteins that transfer electrons in a wide variety of metabolic reactions. This Acetivibrio thermocellus (Hungateiclostridium thermocellum) protein is Ferredoxin.